Consider the following 418-residue polypeptide: Probable carboxypeptidase AO090166000075 (418 aa).

The N-terminal stretch at 1–18 (MKATDLFHVTALVAGALA) is a signal peptide. Asn-74 carries an N-linked (GlcNAc...) asparagine glycan. Asp-147 is a binding site for Zn(2+). The N-linked (GlcNAc...) asparagine glycan is linked to Asn-168. Glu-179 (proton acceptor) is an active-site residue. Position 180 (Glu-180) interacts with Zn(2+).

The protein belongs to the peptidase M20A family. Zn(2+) is required as a cofactor.

Its subcellular location is the secreted. The polypeptide is Probable carboxypeptidase AO090166000075 (Aspergillus oryzae (strain ATCC 42149 / RIB 40) (Yellow koji mold)).